We begin with the raw amino-acid sequence, 543 residues long: Secreted effector protein SptP (543 aa).

The chaperone-binding stretch occupies residues 35–139 (TDKAYVAPEK…FINLIKNKDN (105 aa)). The Bacterial Rho-GAP domain maps to 162 to 293 (DVGAESKQPL…TAELEKIKAG (132 aa)). One can recognise a Tyrosine-protein phosphatase domain in the interval 315–543 (IPINQQTQVK…QAQLLMTTAS (229 aa)). Cys481 (phosphocysteine intermediate) is an active-site residue.

In terms of assembly, forms a complex with SicP.

Its subcellular location is the secreted. The protein resides in the host cytoplasm. It carries out the reaction O-phospho-L-tyrosyl-[protein] + H2O = L-tyrosyl-[protein] + phosphate. In terms of biological role, effector proteins function to alter host cell physiology and promote bacterial survival in host tissues. This protein includes tyrosine phosphatase and GTPase activating protein (GAP) activities. After bacterial internalization, GAP mediates the reversal of the cytoskeletal changes induced by SopE. This function is independent of its tyrosine phosphatase activity, which remains unclear. This Salmonella typhi protein is Secreted effector protein SptP (sptP).